The following is an 85-amino-acid chain: Small ribosomal subunit protein bS16c (85 aa).

Belongs to the bacterial ribosomal protein bS16 family.

It localises to the plastid. The protein resides in the chloroplast. The polypeptide is Small ribosomal subunit protein bS16c (Nicotiana tabacum (Common tobacco)).